Consider the following 423-residue polypeptide: MTESVLDYMTRLGRAAREASRVIGRASTAQKNRALLAAANALDAARAELAAANEQDLATGRANGLEPALLERLELTPARIDGMIVGLRQVAALPDPVGAIRDMSFRPSGIQVGKMRVPLGVIGIIYESRPNVTIDAASLCLKSGNATILRGGSEAIHSNRAIAACIQRGLAAAELPAAVVQVVETTDRAAVGALITMPEYVDVIVPRGGRGLIERISRDARVPVIKHLDGICHVYVSEHADLPKAQRIAFNAKTYRYGICGAMETLLVDQRVAKDFLPSMAKQFREKGVELRGCERTRAIIEAVAATEEDWSTEYLAPILSIRVVDGLDQAIEHINHFGSHHTDSIVSENLADTRQFVAQVDSASVMINTPTCFADGFEYGLGAEIGISTDKLHARGPVGLEGLTCEKYIVVGDGQLRGQATV.

Belongs to the gamma-glutamyl phosphate reductase family.

It is found in the cytoplasm. The enzyme catalyses L-glutamate 5-semialdehyde + phosphate + NADP(+) = L-glutamyl 5-phosphate + NADPH + H(+). It functions in the pathway amino-acid biosynthesis; L-proline biosynthesis; L-glutamate 5-semialdehyde from L-glutamate: step 2/2. Its function is as follows. Catalyzes the NADPH-dependent reduction of L-glutamate 5-phosphate into L-glutamate 5-semialdehyde and phosphate. The product spontaneously undergoes cyclization to form 1-pyrroline-5-carboxylate. The chain is Gamma-glutamyl phosphate reductase from Pseudomonas fluorescens (strain Pf0-1).